Here is a 526-residue protein sequence, read N- to C-terminus: MTGMPLHRALLKNFLGYAPDWYKLTIFCFLLVNPLLFYFVSPFWAGWLLVVEFIFTLGMALKCYPLQPGGLLALQAMLIGMTSPQQVWHEVTGNIEVLMLLVFMVAGIYFMKQLLLFVFTKLLLRIHSKALLSLAFCGAAAFLSAFLDALTVIAVVISVAIGFYGIYHRFASQQGGNEADISDDSALSSEEHRHTLEQFRAFLRSLLMHAGVGTALGGVMTMVGEPQNLIIAKSAGWDFVSFFLHMSPVTVPVFICGILTCVLVERFKLFGYGVNLPDNVRRVLEDYDRDMTEKRTPQDKVRLLVQAVIGVWLIVALAFHLAEVGLIGLSVIIMATAFCGVTEEHAIGKAFQDAMPFTALLTVFFAIVAVIIDQQLFSPIIRYVLQSSESSQLTQFYLFNGLLSSISDNVFVGSVYINEARSAFENGHISLSQFELLAVAINTGTNLPSVATPNGQAAFLFLLTSSLAPLIRLSYGRMVIMALPYTIVMTLVGLLCVEFTLVPFTDFLMNNHWISLPNLTLSGSHS.

The next 11 helical transmembrane spans lie at 14 to 34, 63 to 83, 99 to 119, 122 to 142, 146 to 166, 206 to 226, 239 to 259, 307 to 327, 357 to 377, 451 to 471, and 479 to 499; these read FLGYAPDWYKLTIFCFLLVNP, CYPLQPGGLLALQAMLIGMTS, MLLVFMVAGIYFMKQLLLFVF, LLLRIHSKALLSLAFCGAAAF, FLDALTVIAVVISVAIGFYGI, LLMHAGVGTALGGVMTMVGEP, FVSFFLHMSPVTVPVFICGIL, AVIGVWLIVALAFHLAEVGLI, FTALLTVFFAIVAVIIDQQLF, ATPNGQAAFLFLLTSSLAPLI, and VIMALPYTIVMTLVGLLCVEF.

It belongs to the NhaB Na(+)/H(+) (TC 2.A.34) antiporter family.

It localises to the cell inner membrane. It catalyses the reaction 2 Na(+)(in) + 3 H(+)(out) = 2 Na(+)(out) + 3 H(+)(in). Functionally, na(+)/H(+) antiporter that extrudes sodium in exchange for external protons. In Pectobacterium carotovorum subsp. carotovorum (strain PC1), this protein is Na(+)/H(+) antiporter NhaB.